The primary structure comprises 762 residues: Multifunctional tryptophan biosynthesis protein (762 aa).

The Glutamine amidotransferase type-1 domain occupies Asn25–Glu224. Residue Gly76 to Gly78 participates in L-glutamine binding. Cys104 serves as the catalytic Nucleophile; for GATase activity. Residues Gln108 and Ser154–Leu155 each bind L-glutamine. Residues His198 and Glu200 each act as for GATase activity in the active site. An indole-3-glycerol phosphate synthase region spans residues Ile251–Cys515. Residues Leu531–Arg762 form an N-(5'-phosphoribosyl)anthranilate isomerase region.

In terms of assembly, tetramer of two components I and two components II.

It catalyses the reaction chorismate + L-glutamine = anthranilate + pyruvate + L-glutamate + H(+). It carries out the reaction N-(5-phospho-beta-D-ribosyl)anthranilate = 1-(2-carboxyphenylamino)-1-deoxy-D-ribulose 5-phosphate. The catalysed reaction is 1-(2-carboxyphenylamino)-1-deoxy-D-ribulose 5-phosphate + H(+) = (1S,2R)-1-C-(indol-3-yl)glycerol 3-phosphate + CO2 + H2O. Its pathway is amino-acid biosynthesis; L-tryptophan biosynthesis; L-tryptophan from chorismate: step 1/5. It functions in the pathway amino-acid biosynthesis; L-tryptophan biosynthesis; L-tryptophan from chorismate: step 3/5. The protein operates within amino-acid biosynthesis; L-tryptophan biosynthesis; L-tryptophan from chorismate: step 4/5. Functionally, trifunctional enzyme bearing the Gln amidotransferase (GATase) domain of anthranilate synthase, indole-glycerolphosphate synthase, and phosphoribosylanthranilate isomerase activities. This Neurospora crassa (strain ATCC 24698 / 74-OR23-1A / CBS 708.71 / DSM 1257 / FGSC 987) protein is Multifunctional tryptophan biosynthesis protein (trp-1).